The following is a 439-amino-acid chain: MSTIKSVFAREILDSRGNPTVEVDLTTEKGLFRSAVPSGASTGIYEACELRDGDKSRYLGKGVLKAVENVNKILAPKLIGLDVTKQGEIDRLMLQIDGTENKTHLGANAILGCSMSVCRAAAAFRGLPLYRYIAELSGNKSPMLPLPCFNVINGGEHAGNKLAMQEFMICPTGATSFHEALRMAAETYHNLKLVIKKRYGMDATNVGDEGGFAPNIQANHEGLELIVEAIKQAGYTGKIEIGMDVAASSFWDAKESKYDLGFKVPADKKTPDMLVSGEGLIKLYEEWTSKYPIWSIEDPFDQDDWATYTRFTELIRNRIQIVGDDLLVTNPKRIVEARNKKACNALLLKLNQIGSVSEAVEACRLAREVNWGVMVSHRSGETEDAFIADLVVGLGCGQIKTGAPCRSERLAKYNQLLRIEEELGANAHYAAKTLSGVGH.

Substrate-binding residues include histidine 157 and glutamate 166. The active-site Proton donor is the glutamate 209. Mg(2+) contacts are provided by aspartate 244, glutamate 297, and aspartate 324. Substrate is bound by residues glutamate 297 and aspartate 324. Lysine 349 acts as the Proton acceptor in catalysis. Residues 376–379 (SHRS) and lysine 400 contribute to the substrate site.

The protein belongs to the enolase family. As to quaternary structure, homodimer. Mg(2+) is required as a cofactor.

The protein resides in the cytoplasm. The catalysed reaction is (2R)-2-phosphoglycerate = phosphoenolpyruvate + H2O. The protein operates within carbohydrate degradation; glycolysis; pyruvate from D-glyceraldehyde 3-phosphate: step 4/5. This is Enolase (ENOL) from Mastigamoeba balamuthi (Phreatamoeba balamuthi).